We begin with the raw amino-acid sequence, 253 residues long: MICOS complex subunit mic25-b (253 aa).

Glycine 2 carries N-myristoyl glycine lipidation. The disordered stretch occupies residues 38-82 (KDQSTWAASGAASGSATVPSKVGSSASHPAAASKDGAHKPTAAGV). Residues 44 to 53 (AASGAASGSA) are compositionally biased toward low complexity. The stretch at 87 to 116 (AEEDLYRRYEREQTLIQEELARLAKREKDA) forms a coiled coil. The region spanning 206–248 (DPVCMDLQSNILKCYAENKQERLNCSDLAKEYQKCVSAAQKNL) is the CHCH domain. Short sequence motifs (cx9C motif) lie at residues 209-219 (CMDLQSNILKC) and 230-240 (CSDLAKEYQKC). Disulfide bonds link cysteine 209-cysteine 240 and cysteine 219-cysteine 230.

This sequence belongs to the MICOS complex subunit Mic19 family. Metazoan Mic25 subfamily. In terms of assembly, component of the mitochondrial contact site and cristae organizing system (MICOS) complex (also known as MINOS or MitOS complex).

Its subcellular location is the mitochondrion inner membrane. Functionally, component of the MICOS complex, a large protein complex of the mitochondrial inner membrane that plays crucial roles in the maintenance of crista junctions, inner membrane architecture, and formation of contact sites to the outer membrane. This Xenopus laevis (African clawed frog) protein is MICOS complex subunit mic25-b (chchd6-b).